We begin with the raw amino-acid sequence, 421 residues long: Diaminopimelate decarboxylase (421 aa).

The residue at position 63 (Lys63) is an N6-(pyridoxal phosphate)lysine. Residues Gly242 and 278 to 281 (EPGR) each bind pyridoxal 5'-phosphate. Arg281, Arg317, and Tyr321 together coordinate substrate. Cys346 functions as the Proton donor in the catalytic mechanism. Residues Glu347 and Tyr375 each coordinate substrate. Residue Tyr375 participates in pyridoxal 5'-phosphate binding.

It belongs to the Orn/Lys/Arg decarboxylase class-II family. LysA subfamily. As to quaternary structure, homodimer. Requires pyridoxal 5'-phosphate as cofactor.

The catalysed reaction is meso-2,6-diaminopimelate + H(+) = L-lysine + CO2. It participates in amino-acid biosynthesis; L-lysine biosynthesis via DAP pathway; L-lysine from DL-2,6-diaminopimelate: step 1/1. Its function is as follows. Specifically catalyzes the decarboxylation of meso-diaminopimelate (meso-DAP) to L-lysine. In Zymomonas mobilis subsp. mobilis (strain ATCC 31821 / ZM4 / CP4), this protein is Diaminopimelate decarboxylase.